A 338-amino-acid chain; its full sequence is 4-hydroxy-2-oxovalerate aldolase (338 aa).

A Pyruvate carboxyltransferase domain is found at isoleucine 6–methionine 256. Substrate is bound at residue arginine 14–aspartate 15. Position 15 (aspartate 15) interacts with Mn(2+). Histidine 18 (proton acceptor) is an active-site residue. The substrate site is built by serine 168 and histidine 195. The Mn(2+) site is built by histidine 195 and histidine 197. Tyrosine 286 contributes to the substrate binding site.

The protein belongs to the 4-hydroxy-2-oxovalerate aldolase family.

It catalyses the reaction (S)-4-hydroxy-2-oxopentanoate = acetaldehyde + pyruvate. The polypeptide is 4-hydroxy-2-oxovalerate aldolase (Moorella thermoacetica (strain ATCC 39073 / JCM 9320)).